A 215-amino-acid chain; its full sequence is Large ribosomal subunit protein uL1 (215 aa).

It belongs to the universal ribosomal protein uL1 family. Part of the 50S ribosomal subunit.

Functionally, binds directly to 23S rRNA. Probably involved in E site tRNA release. Protein L1 is also a translational repressor protein, it controls the translation of its operon by binding to its mRNA. In Staphylothermus marinus (strain ATCC 43588 / DSM 3639 / JCM 9404 / F1), this protein is Large ribosomal subunit protein uL1.